A 122-amino-acid chain; its full sequence is WUSCHEL-related homeobox 7 (122 aa).

A DNA-binding region (homeobox; WUS-type) is located at residues 25 to 89; sequence AKCGRWNPTV…NHKARERQKC (65 aa). Over residues 98-111 the composition is skewed to basic and acidic residues; sequence DHRQDTDLSKPRRD. Residues 98-122 form a disordered region; it reads DHRQDTDLSKPRRDNVRRHQLPAKG. Positions 112-122 are enriched in basic residues; sequence NVRRHQLPAKG.

It belongs to the WUS homeobox family.

It is found in the nucleus. In terms of biological role, potential transcription factor that plays a central role during developmental processes. This chain is WUSCHEL-related homeobox 7 (WOX7), found in Arabidopsis thaliana (Mouse-ear cress).